The chain runs to 64 residues: PYLa/PGLa A (64 aa).

Residues 1 to 20 form the signal peptide; the sequence is MYKQIFLCLIIAALCATIMA. The propeptide occupies 21–35; sequence EASAFADADEDDDKR. Leucine 59 carries the post-translational modification Leucine amide. Positions 60-64 are excised as a propeptide; it reads GRRDS.

The protein belongs to the gastrin/cholecystokinin family. Magainin subfamily. In terms of tissue distribution, expressed by the skin glands. Synthesized in the stomach and stored in a novel granular multinucleated cell in the gastric mucosa. Stored as active, processed peptides in large granules within the granular gland secretions of the skin.

The protein resides in the secreted. Functionally, PGLa and PGLa-H display a broad-spectrum of antibacterial activity against a range of Gram-positive and Gram-negative bacteria. PGLa also displays antifungal activity against C.albicans ATCC 14053. PGLa-H shows moderate antibacterial activity against the multidrug-resistant methicillin-resistant S.aureus (MRSA) but exhibits very little hemolytic activity. The sequence is that of PYLa/PGLa A (pgla-a) from Xenopus laevis (African clawed frog).